Reading from the N-terminus, the 447-residue chain is Xylose isomerase (447 aa).

Active-site residues include histidine 102 and aspartate 105. The Mg(2+) site is built by glutamate 233, glutamate 269, histidine 272, aspartate 297, aspartate 308, aspartate 310, and aspartate 340.

The protein belongs to the xylose isomerase family. In terms of assembly, homotetramer. Requires Mg(2+) as cofactor.

It localises to the cytoplasm. The enzyme catalyses alpha-D-xylose = alpha-D-xylulofuranose. The chain is Xylose isomerase from Pediococcus pentosaceus (strain ATCC 25745 / CCUG 21536 / LMG 10740 / 183-1w).